A 387-amino-acid polypeptide reads, in one-letter code: GDP-mannose transporter (387 aa).

Positions 1-25 (MADTKKNDNYAIDMDKLDAESDRFR) are enriched in basic and acidic residues. The Cytoplasmic portion of the chain corresponds to 1–42 (MADTKKNDNYAIDMDKLDAESDRFRPPPQPQPRHSSSSHSQS). Residues 1-45 (MADTKKNDNYAIDMDKLDAESDRFRPPPQPQPRHSSSSHSQSISN) form a disordered region. The segment covering 32–45 (PRHSSSSHSQSISN) has biased composition (low complexity). Residues 43–63 (ISNSPVLPILSYCASSILMTV) form a helical membrane-spanning segment. The Lumenal portion of the chain corresponds to 64-71 (TNKYVLSG). A helical membrane pass occupies residues 72–92 (VQFNLNFFLLCVQSVVCIIAI). Over 93–112 (QTCKSMGLINYRDFNSDEAK) the chain is Cytoplasmic. Residues 113–129 (KWFPISLLLIGMIYTGT) form a helical membrane-spanning segment. Residues 130-136 (KALKFLS) are Lumenal-facing. Residues 137–153 (IPVYTIFKNLTIILIAY) form a helical membrane-spanning segment. Topologically, residues 154–162 (GEVLWFGGS) are cytoplasmic. Residues 163–184 (VTGMALFSFGLMVLSSVIAAWA) form a helical membrane-spanning segment. Topologically, residues 185 to 206 (DIKHALDTSGFSGAEATSKIST) are lumenal. The helical transmembrane segment at 207-227 (LNAGYIWMLINCLCTSTYILG) threads the bilayer. Residues 228 to 241 (MRKRIKLTNFKDFD) lie on the Cytoplasmic side of the membrane. Residues 242 to 262 (TMFYNNLLSIPILMIGSFIVE) form a helical membrane-spanning segment. The Lumenal segment spans residues 263 to 280 (DWSSENINKNFPIETRNS). A helical membrane pass occupies residues 281–301 (LIFAMIFSGLSSVFISYTSAW). At 302 to 309 (CVRVTSST) the chain is on the cytoplasmic side. A helical membrane pass occupies residues 310-329 (TYSMVGALNKLPIALSGLIF). The Lumenal segment spans residues 330-332 (FGD). A helical membrane pass occupies residues 333–355 (PVTVPSVSAIVVGFISGIVYSLA). Over 356–387 (KVKQNAKPRTGVLPTTNPVSASTQSMRDGLKS) the chain is Cytoplasmic. The tract at residues 366–387 (GVLPTTNPVSASTQSMRDGLKS) is disordered. Polar residues predominate over residues 368–381 (LPTTNPVSASTQSM).

This sequence belongs to the TPT transporter family. SLC35D subfamily. In terms of assembly, homooligomer.

It is found in the golgi apparatus membrane. Its subcellular location is the cytoplasmic vesicle membrane. It localises to the endoplasmic reticulum membrane. Its function is as follows. Involved in the import of GDP-mannose from the cytoplasm into the Golgi lumen. In Coccidioides immitis (strain RS) (Valley fever fungus), this protein is GDP-mannose transporter (VRG4).